The sequence spans 286 residues: Transcriptional regulator of yeast form adherence 4 (286 aa).

Low complexity-rich tracts occupy residues 1 to 29 and 37 to 65; these read MSLPMSPVSPINTTTSTSTTTTPLSPPSS and LSTSISNNSITSDSSLDSNTSTSSTTTTN. The tract at residues 1 to 71 is disordered; sequence MSLPMSPVSP…TTTNYGTKTP (71 aa). 2 C2H2-type zinc fingers span residues 78–101 and 107–130; these read FNCTLCQRAFTREEHLTRHTLSTH and FTCGICSRPFSRRDLLLRHAKNLH. The interval 146–260 is disordered; sequence HCNKDNDSKS…ITNSSTSHIH (115 aa). 2 stretches are compositionally biased toward low complexity: residues 156–165 and 228–244; these read GSDSNTNKTN and SVPSTTTTSTTTVPTST. The segment covering 245 to 260 has biased composition (polar residues); sequence NNDTASITNSSTSHIH.

It localises to the nucleus. In terms of biological role, transcription factor required for yeast cell adherence to silicone substrate. The polypeptide is Transcriptional regulator of yeast form adherence 4 (TRY4) (Candida albicans (strain SC5314 / ATCC MYA-2876) (Yeast)).